Here is a 320-residue protein sequence, read N- to C-terminus: Cytochrome f (320 aa).

An N-terminal signal peptide occupies residues 1-35 (MQTRNAFSCIKEGITRSISISVMIYIIIRAPFSNA). Residues tyrosine 36, cysteine 56, cysteine 59, and histidine 60 each coordinate heme. A helical membrane pass occupies residues 286–306 (VQGLLFFLASIILAQIFLVLK).

This sequence belongs to the cytochrome f family. The 4 large subunits of the cytochrome b6-f complex are cytochrome b6, subunit IV (17 kDa polypeptide, petD), cytochrome f and the Rieske protein, while the 4 small subunits are PetG, PetL, PetM and PetN. The complex functions as a dimer. Requires heme as cofactor.

It is found in the plastid. Its subcellular location is the chloroplast thylakoid membrane. Component of the cytochrome b6-f complex, which mediates electron transfer between photosystem II (PSII) and photosystem I (PSI), cyclic electron flow around PSI, and state transitions. In Phaseolus vulgaris (Kidney bean), this protein is Cytochrome f.